We begin with the raw amino-acid sequence, 126 residues long: Large ribosomal subunit protein bL12 (126 aa).

This sequence belongs to the bacterial ribosomal protein bL12 family. In terms of assembly, homodimer. Part of the ribosomal stalk of the 50S ribosomal subunit. Forms a multimeric L10(L12)X complex, where L10 forms an elongated spine to which 2 to 4 L12 dimers bind in a sequential fashion. Binds GTP-bound translation factors.

Forms part of the ribosomal stalk which helps the ribosome interact with GTP-bound translation factors. Is thus essential for accurate translation. In Saccharophagus degradans (strain 2-40 / ATCC 43961 / DSM 17024), this protein is Large ribosomal subunit protein bL12.